We begin with the raw amino-acid sequence, 434 residues long: dTDP-D-glucose 4,6-dehydratase (434 aa).

Residue threonine 134 coordinates substrate. The active-site Proton donor is aspartate 135. Active-site proton acceptor residues include glutamate 136 and tyrosine 169. Over residues 286 to 309 (NNNNNNNNNNNNNNNNNNNNNNNN) the composition is skewed to low complexity. The disordered stretch occupies residues 286 to 310 (NNNNNNNNNNNNNNNNNNNNNNNND).

Belongs to the NAD(P)-dependent epimerase/dehydratase family. dTDP-glucose dehydratase subfamily. Requires NAD(+) as cofactor.

The enzyme catalyses dTDP-alpha-D-glucose = dTDP-4-dehydro-6-deoxy-alpha-D-glucose + H2O. The polypeptide is dTDP-D-glucose 4,6-dehydratase (tgds) (Dictyostelium discoideum (Social amoeba)).